The following is a 289-amino-acid chain: Phosphatidylglycerol--prolipoprotein diacylglyceryl transferase (289 aa).

The next 4 membrane-spanning stretches (helical) occupy residues 21–41 (IGPLSIRWYGLLIASAVLLGI), 53–73 (IDPNAIADLAVWLVIGAIPAA), 95–115 (IWHGGIAIHGAILGGTAALIL), and 122–142 (IPIWQLTDVVVPSLALGQAIG). A 1,2-diacyl-sn-glycero-3-phospho-(1'-sn-glycerol) is bound at residue arginine 143. The next 3 helical transmembrane spans lie at 182–202 (PTFLYESLWNLLLCLLLIWLF), 215–235 (GVMTCIYLIGYSLGRIWIEGL), and 247–267 (IAQMVSIVAIAFGVLGLVWIY).

It belongs to the Lgt family.

Its subcellular location is the cell inner membrane. It carries out the reaction L-cysteinyl-[prolipoprotein] + a 1,2-diacyl-sn-glycero-3-phospho-(1'-sn-glycerol) = an S-1,2-diacyl-sn-glyceryl-L-cysteinyl-[prolipoprotein] + sn-glycerol 1-phosphate + H(+). The protein operates within protein modification; lipoprotein biosynthesis (diacylglyceryl transfer). Catalyzes the transfer of the diacylglyceryl group from phosphatidylglycerol to the sulfhydryl group of the N-terminal cysteine of a prolipoprotein, the first step in the formation of mature lipoproteins. The protein is Phosphatidylglycerol--prolipoprotein diacylglyceryl transferase of Synechococcus elongatus (strain ATCC 33912 / PCC 7942 / FACHB-805) (Anacystis nidulans R2).